Here is a 360-residue protein sequence, read N- to C-terminus: Glutamate 5-kinase (360 aa).

ATP is bound at residue Lys7. 3 residues coordinate substrate: Ser47, Asp134, and Asn146. Residues 166–167 (TD) and 210–216 (TGGISTK) each bind ATP. Positions 275–356 (VGKITLDDGA…SSIIVVHRDV (82 aa)) constitute a PUA domain.

Belongs to the glutamate 5-kinase family.

The protein localises to the cytoplasm. The enzyme catalyses L-glutamate + ATP = L-glutamyl 5-phosphate + ADP. It participates in amino-acid biosynthesis; L-proline biosynthesis; L-glutamate 5-semialdehyde from L-glutamate: step 1/2. Functionally, catalyzes the transfer of a phosphate group to glutamate to form L-glutamate 5-phosphate. This chain is Glutamate 5-kinase, found in Prochlorococcus marinus (strain MIT 9312).